The primary structure comprises 318 residues: MNISNKVPFKFSLEVKEALESGKPVVALESNVITHGLDYPDNVTTAKNVEQAVRESGAIPATIGIDKGEFLIGMSDEQIEKFATASHVPKVTSRDIPVVLASGGMGATTVASSILAAEIAGIKFFCSAGIGGVHRGAETSMDISADLTQLTRSRVAVVCAGAKNILDIGLTLEFLETWNVPVISYQSDDFPAFYCRSSGFKSPQRLDELAVIAKAIEINWMLPGGKGVLITTPTKPEDALDNQKIDIIIQEAVLEAKKKNIVGNSLTKYLMRMVDRETDGISAKANMAVLVNTAEVAGKLAVAACLQSSTFFARIKSQ.

Catalysis depends on E29, which acts as the Proton donor. Substrate contacts are provided by K90 and V110. D142 contributes to the Mn(2+) binding site. Residue 144–146 (SAD) coordinates substrate. K163 (nucleophile) is an active-site residue.

The protein belongs to the pseudouridine-5'-phosphate glycosidase family. As to quaternary structure, homotrimer. Mn(2+) is required as a cofactor.

It carries out the reaction D-ribose 5-phosphate + uracil = psi-UMP + H2O. Its function is as follows. Catalyzes the reversible cleavage of pseudouridine 5'-phosphate (PsiMP) to ribose 5-phosphate and uracil. Functions biologically in the cleavage direction, as part of a pseudouridine degradation pathway. This is Pseudouridine-5'-phosphate glycosidase 1 from Photorhabdus laumondii subsp. laumondii (strain DSM 15139 / CIP 105565 / TT01) (Photorhabdus luminescens subsp. laumondii).